A 574-amino-acid chain; its full sequence is MPRGLELLIAQTILQGFDAQYGRFLEVTSGAQQRFEQADWHAVQQAMKNRIHLYDHHVGLVVEQLRCITNGQSTDAAFLLRVKEHYTRLLPDYPRFEIAESFFNSVYCRLFDHRSLTPERLFIFSSQPERRFRTIPRPLAKDFHPDHGWESLLMRVISDLPLRLRWQNKSRDIHYIVRHLTETLGTDNLAESHLQVANELFYRNKAAWLVGKLITPSGTLPFLLPIHQTDDGELFIDTCLTTTAEASIVFGFARSYFMVYAPLPAALVEWLREILPGKTTAELYMAIGCQKHAKTESYREYLVYLQGCNEQFIEAPGIRGMVMLVFTLPGFDRVFKVIKDRFAPQKEMSAAHVRACYQLVKEHDRVGRMADTQEFENFVLEKRHISPALMALLLQEAAEKITDLGEQIVIRHLYIERRMVPLNIWLEQVEGQQLRDAIEEYGNAIRQLAAANIFPGDMLFKNFGVTRHGRVVFYDYDEICYMTEVNFRDIPLPRYPEDELASEPWYSVSPGDVFPEEFRHWLCADPRIGPLFEEMHADLFRADYWRALQNRIREGHVEDVYAYRRRQRFSVRFV.

Residues 315–321 (APGIRGM) and Lys-336 contribute to the ATP site. Residue Asp-371 is part of the active site.

This sequence belongs to the AceK family.

It is found in the cytoplasm. It catalyses the reaction L-seryl-[isocitrate dehydrogenase] + ATP = O-phospho-L-seryl-[isocitrate dehydrogenase] + ADP + H(+). Bifunctional enzyme which can phosphorylate or dephosphorylate isocitrate dehydrogenase (IDH) on a specific serine residue. This is a regulatory mechanism which enables bacteria to bypass the Krebs cycle via the glyoxylate shunt in response to the source of carbon. When bacteria are grown on glucose, IDH is fully active and unphosphorylated, but when grown on acetate or ethanol, the activity of IDH declines drastically concomitant with its phosphorylation. The protein is Isocitrate dehydrogenase kinase/phosphatase of Escherichia coli O127:H6 (strain E2348/69 / EPEC).